The primary structure comprises 201 residues: Ribonuclease HII (201 aa).

Positions 10–200 (LIEAGCDEAG…LGDGQLELFS (191 aa)) constitute an RNase H type-2 domain. 3 residues coordinate a divalent metal cation: Asp-16, Glu-17, and Asp-108.

Belongs to the RNase HII family. Requires Mn(2+) as cofactor. Mg(2+) is required as a cofactor.

The protein resides in the cytoplasm. The catalysed reaction is Endonucleolytic cleavage to 5'-phosphomonoester.. Endonuclease that specifically degrades the RNA of RNA-DNA hybrids. This chain is Ribonuclease HII, found in Bacteroides fragilis (strain ATCC 25285 / DSM 2151 / CCUG 4856 / JCM 11019 / LMG 10263 / NCTC 9343 / Onslow / VPI 2553 / EN-2).